The following is a 1148-amino-acid chain: Minor outer capsid protein P2 (1148 aa).

Positions 929–1148 constitute a PPPDE domain; the sequence is ENNAANFFER…LYIQSIYDAL (220 aa). Residues His-953 and Cys-1111 contribute to the active site.

Belongs to the phytoreovirus minor outer capsid protein P2 family. Interacts with host ent-kaurene oxidases OSKO1, OSKO2, OSKOL4 and OSKOL5; this interaction.

The protein resides in the virion. It localises to the host cytoplasm. In terms of biological role, minor capsid protein present in the outer capsid, which is required for adsorption of the virus onto host insect cells (Potential). Could play a role in the host plant virus induced dwarfism. This Rice dwarf virus (isolate O) (RDV) protein is Minor outer capsid protein P2.